Here is a 337-residue protein sequence, read N- to C-terminus: Glyceraldehyde-3-phosphate dehydrogenase (337 aa).

NAD(+) is bound by residues 11–12 (TI) and G110. A D-glyceraldehyde 3-phosphate-binding site is contributed by 139 to 141 (SCN). C140 functions as the Nucleophile in the catalytic mechanism. R168 provides a ligand contact to NAD(+). 194-195 (HG) provides a ligand contact to D-glyceraldehyde 3-phosphate. Q301 contributes to the NAD(+) binding site.

It belongs to the glyceraldehyde-3-phosphate dehydrogenase family. Homotetramer.

It is found in the cytoplasm. The enzyme catalyses D-glyceraldehyde 3-phosphate + phosphate + NADP(+) = (2R)-3-phospho-glyceroyl phosphate + NADPH + H(+). It carries out the reaction D-glyceraldehyde 3-phosphate + phosphate + NAD(+) = (2R)-3-phospho-glyceroyl phosphate + NADH + H(+). It participates in carbohydrate degradation; glycolysis; pyruvate from D-glyceraldehyde 3-phosphate: step 1/5. The protein is Glyceraldehyde-3-phosphate dehydrogenase (gap) of Methanothermobacter thermautotrophicus (strain ATCC 29096 / DSM 1053 / JCM 10044 / NBRC 100330 / Delta H) (Methanobacterium thermoautotrophicum).